The chain runs to 642 residues: Chaperone protein DnaK (642 aa).

The residue at position 198 (Thr-198) is a Phosphothreonine; by autocatalysis. The segment at 602 to 642 (EAAGGAEAEAAAGGHGGASGSHDDKVVDADFEEVDGDKKGK) is disordered. Over residues 603–613 (AAGGAEAEAAA) the composition is skewed to low complexity.

This sequence belongs to the heat shock protein 70 family.

Its function is as follows. Acts as a chaperone. This chain is Chaperone protein DnaK, found in Paramagnetospirillum magneticum (strain ATCC 700264 / AMB-1) (Magnetospirillum magneticum).